The sequence spans 293 residues: uncharacterized protein (293 aa).

This is an uncharacterized protein from Treponema pallidum (strain Nichols).